We begin with the raw amino-acid sequence, 340 residues long: tRNA N6-adenosine threonylcarbamoyltransferase (340 aa).

Fe cation is bound by residues His-115 and His-119. Residues Val-138 to Gly-142, Asp-171, Gly-184, Asp-188, and Asn-278 contribute to the substrate site. Asp-306 is a binding site for Fe cation.

This sequence belongs to the KAE1 / TsaD family. The cofactor is Fe(2+).

It is found in the cytoplasm. The catalysed reaction is L-threonylcarbamoyladenylate + adenosine(37) in tRNA = N(6)-L-threonylcarbamoyladenosine(37) in tRNA + AMP + H(+). Required for the formation of a threonylcarbamoyl group on adenosine at position 37 (t(6)A37) in tRNAs that read codons beginning with adenine. Is involved in the transfer of the threonylcarbamoyl moiety of threonylcarbamoyl-AMP (TC-AMP) to the N6 group of A37, together with TsaE and TsaB. TsaD likely plays a direct catalytic role in this reaction. This Clostridium botulinum (strain Kyoto / Type A2) protein is tRNA N6-adenosine threonylcarbamoyltransferase.